Here is a 568-residue protein sequence, read N- to C-terminus: Putative DEAD-box RNA helicase HEL64 (568 aa).

Residues M1–R34 are disordered. Positions G23–R34 are enriched in basic and acidic residues. The Q motif motif lies at F102–A130. A Helicase ATP-binding domain is found at W133 to I307. A146–T153 is an ATP binding site. Positions D255–D258 match the DEAD box motif. The Helicase C-terminal domain occupies E335 to N483.

The protein belongs to the DEAD box helicase family. DDX5/DBP2 subfamily.

The protein resides in the nucleus. It catalyses the reaction ATP + H2O = ADP + phosphate + H(+). The chain is Putative DEAD-box RNA helicase HEL64 (HEL64) from Trypanosoma brucei brucei.